The sequence spans 89 residues: Small ribosomal subunit protein bS20 (89 aa).

A disordered region spans residues 1 to 26 (MANIKASKKDALTSEKRRKKNSSRRS). Residues 16–26 (KRRKKNSSRRS) show a composition bias toward basic residues.

This sequence belongs to the bacterial ribosomal protein bS20 family.

Binds directly to 16S ribosomal RNA. This chain is Small ribosomal subunit protein bS20, found in Buchnera aphidicola subsp. Acyrthosiphon pisum (strain 5A).